A 559-amino-acid polypeptide reads, in one-letter code: D-2-hydroxyglutarate dehydrogenase, mitochondrial (559 aa).

Residues 1-78 constitute a mitochondrion transit peptide; sequence MMMQKLRRSG…GMLLQQYKCF (78 aa). Positions 130-309 constitute an FAD-binding PCMH-type domain; the sequence is YKGSSKLMLL…TKVSILTQPK (180 aa).

The protein belongs to the FAD-binding oxidoreductase/transferase type 4 family. As to quaternary structure, homodimer. It depends on FAD as a cofactor.

It localises to the mitochondrion. It catalyses the reaction (R)-2-hydroxyglutarate + A = 2-oxoglutarate + AH2. In terms of biological role, catalyzes the oxidation of (R)-2-hydroxyglutarate to 2-oxoglutarate. May be involved in the catabolism of propionyl-CoA derived from beta-oxidation. Involved in degradation of lysine for the supply of carbon and electrons to the ETF/ETFQO complex during dark-induced sugar starvation. The sequence is that of D-2-hydroxyglutarate dehydrogenase, mitochondrial (D2HGDH) from Arabidopsis thaliana (Mouse-ear cress).